The primary structure comprises 116 residues: Dynein light chain Tctex-type 3 (116 aa).

At tyrosine 4 the chain carries 3'-nitrotyrosine.

Belongs to the dynein light chain Tctex-type family. Homodimer. The cytoplasmic dynein 1 complex consists of two catalytic heavy chains (HCs) and a number of non-catalytic subunits presented by intermediate chains (ICs), light intermediate chains (LICs) and light chains (LCs); the composition seems to vary in respect to the IC, LIC and LC composition. The heavy chain homodimer serves as a scaffold for the probable homodimeric assembly of the respective non-catalytic subunits. The ICs and LICs bind directly to the HC dimer and the LCs assemble on the IC dimer. DYNLT1 and DYNLT3 compete for association with dynein IC (DYNC1I1 or DYNC1I2). Self-associates. Interacts with DYNC1I1 and DYNC1I2. Interacts with BUB3. Interacts with SATB1 in nucleus to form complex with matrix attachment regions (MARs) of DNA.

It is found in the nucleus. Its subcellular location is the cytoplasm. The protein localises to the cytoskeleton. The protein resides in the chromosome. It localises to the centromere. It is found in the kinetochore. In terms of biological role, acts as one of several non-catalytic accessory components of the cytoplasmic dynein 1 complex that are thought to be involved in linking dynein to cargos and to adapter proteins that regulate dynein function. Cytoplasmic dynein 1 acts as a motor for the intracellular retrograde motility of vesicles and organelles along microtubules. Probably binds BUB3 as part of transport cargo. Required for the efficient progression through mitosis. The polypeptide is Dynein light chain Tctex-type 3 (DYNLT3) (Canis lupus familiaris (Dog)).